A 389-amino-acid polypeptide reads, in one-letter code: 11-beta-hydroxysteroid dehydrogenase-like 5 (389 aa).

A helical; Signal-anchor for type II membrane protein membrane pass occupies residues 11–31 (LVAPPATMVVMAFAWPLLSFI). NADP(+)-binding positions include 56-82 (GASS…VARR) and D107. Position 186 (S186) interacts with substrate. Y199 serves as the catalytic Proton acceptor. NADP(+) contacts are provided by residues 199–203 (YSAAK) and K203. Residues 337–381 (LMLEGGPPRVPASPPRYTASPPHYTASPPRYPASPPRYPASPPRF) are disordered. A compositionally biased stretch (pro residues) spans 365 to 378 (PRYPASPPRYPASP).

It belongs to the short-chain dehydrogenases/reductases (SDR) family.

The protein localises to the membrane. The polypeptide is 11-beta-hydroxysteroid dehydrogenase-like 5 (HSD5) (Arabidopsis thaliana (Mouse-ear cress)).